Here is a 237-residue protein sequence, read N- to C-terminus: Endonuclease V (237 aa).

Mg(2+) is bound by residues Asp46 and Asp114.

Belongs to the endonuclease V family. Mg(2+) serves as cofactor.

The protein resides in the cytoplasm. The catalysed reaction is Endonucleolytic cleavage at apurinic or apyrimidinic sites to products with a 5'-phosphate.. In terms of biological role, DNA repair enzyme involved in the repair of deaminated bases. Selectively cleaves double-stranded DNA at the second phosphodiester bond 3' to a deoxyinosine leaving behind the intact lesion on the nicked DNA. The chain is Endonuclease V from Xanthomonas axonopodis pv. citri (strain 306).